Consider the following 421-residue polypeptide: GTPase Obg (421 aa).

One can recognise an Obg domain in the interval 4 to 161 (LHFIDEAFNE…FKIKIQLKVL (158 aa)). The OBG-type G domain maps to 162–327 (ADVGLLGFPS…LKYAIKNLLQ (166 aa)). GTP-binding positions include 168-175 (GFPSVGKS), 193-197 (FTTLF), 214-217 (DLPG), 281-284 (NKMD), and 308-310 (SLI). Ser175 and Thr195 together coordinate Mg(2+). In terms of domain architecture, OCT spans 343–421 (DLNSETQTFT…ICNYLFDFVI (79 aa)).

It belongs to the TRAFAC class OBG-HflX-like GTPase superfamily. OBG GTPase family. As to quaternary structure, monomer. Requires Mg(2+) as cofactor.

It is found in the cytoplasm. In terms of biological role, an essential GTPase which binds GTP, GDP and possibly (p)ppGpp with moderate affinity, with high nucleotide exchange rates and a fairly low GTP hydrolysis rate. Plays a role in control of the cell cycle, stress response, ribosome biogenesis and in those bacteria that undergo differentiation, in morphogenesis control. The chain is GTPase Obg from Phytoplasma australiense.